We begin with the raw amino-acid sequence, 457 residues long: Phosphomethylpyrimidine synthase (457 aa).

Substrate contacts are provided by residues asparagine 80, methionine 109, tyrosine 139, histidine 175, 195-197 (SRG), 236-239 (DSLR), and glutamate 275. Histidine 279 provides a ligand contact to Zn(2+). Tyrosine 302 serves as a coordination point for substrate. Histidine 343 contacts Zn(2+). 3 residues coordinate [4Fe-4S] cluster: cysteine 423, cysteine 426, and cysteine 431.

It belongs to the ThiC family. The cofactor is [4Fe-4S] cluster.

The enzyme catalyses 5-amino-1-(5-phospho-beta-D-ribosyl)imidazole + S-adenosyl-L-methionine = 4-amino-2-methyl-5-(phosphooxymethyl)pyrimidine + CO + 5'-deoxyadenosine + formate + L-methionine + 3 H(+). Its pathway is cofactor biosynthesis; thiamine diphosphate biosynthesis. Functionally, catalyzes the synthesis of the hydroxymethylpyrimidine phosphate (HMP-P) moiety of thiamine from aminoimidazole ribotide (AIR) in a radical S-adenosyl-L-methionine (SAM)-dependent reaction. The protein is Phosphomethylpyrimidine synthase of Trichormus variabilis (strain ATCC 29413 / PCC 7937) (Anabaena variabilis).